Here is a 261-residue protein sequence, read N- to C-terminus: tRNA pseudouridine synthase A (261 aa).

The active-site Nucleophile is aspartate 51. A substrate-binding site is contributed by tyrosine 109.

The protein belongs to the tRNA pseudouridine synthase TruA family. In terms of assembly, homodimer.

It catalyses the reaction uridine(38/39/40) in tRNA = pseudouridine(38/39/40) in tRNA. Formation of pseudouridine at positions 38, 39 and 40 in the anticodon stem and loop of transfer RNAs. This chain is tRNA pseudouridine synthase A, found in Shewanella baltica (strain OS195).